The primary structure comprises 87 residues: Small ribosomal subunit protein bS20 (87 aa).

The disordered stretch occupies residues 1 to 26 (MANIKSAKKRAVQSEKARKHNASRRS).

The protein belongs to the bacterial ribosomal protein bS20 family.

In terms of biological role, binds directly to 16S ribosomal RNA. In Enterobacter sp. (strain 638), this protein is Small ribosomal subunit protein bS20.